The sequence spans 449 residues: Xaa-Pro dipeptidase (449 aa).

Residues D246, D257, H345, E390, and E429 each contribute to the Mn(2+) site.

It belongs to the peptidase M24B family. Bacterial-type prolidase subfamily. It depends on Mn(2+) as a cofactor.

It carries out the reaction Xaa-L-Pro dipeptide + H2O = an L-alpha-amino acid + L-proline. In terms of biological role, splits dipeptides with a prolyl residue in the C-terminal position. This is Xaa-Pro dipeptidase from Yersinia enterocolitica serotype O:8 / biotype 1B (strain NCTC 13174 / 8081).